We begin with the raw amino-acid sequence, 737 residues long: Zinc finger protein 585A (737 aa).

The 65-residue stretch at 1–65 (MAAPTREEWR…QGERPRQSCP (65 aa)) folds into the KRAB domain. C2H2-type zinc fingers lie at residues 126–148 (YVCI…QKTH), 154–176 (FKCN…QRIH), 182–204 (YECS…EKIH), 210–232 (HECT…QKIH), 238–260 (YICI…RRIH), and 266–288 (YECS…QRVH). The segment at 294–316 (YICTEYGKVFSNNSNLITHKKVQ) adopts a C2H2-type 7; degenerate zinc-finger fold. C2H2-type zinc fingers lie at residues 322 to 344 (SICT…QRIH), 350 to 372 (YACS…QRIH), 378 to 400 (YICM…QIIH), 406 to 428 (YKCG…KRIH), 434 to 456 (YMCN…QKTH), 462 to 484 (YICS…QRIH), 490 to 512 (YECS…QKIH), 518 to 540 (YECH…QKIH), 546 to 568 (YVCT…QRIH), 574 to 596 (YECS…QPLH), 602 to 624 (YVCA…QKTH), 630 to 652 (YICS…HRIH), 658 to 680 (YECS…QRIH), 686 to 708 (YVCA…QTTH), and 714 to 736 (YKCG…QSNH).

Belongs to the krueppel C2H2-type zinc-finger protein family.

Its subcellular location is the nucleus. In terms of biological role, may be involved in transcriptional regulation. The sequence is that of Zinc finger protein 585A (ZNF585A) from Pongo abelii (Sumatran orangutan).